The following is a 37-amino-acid chain: Translationally-controlled tumor protein homolog (37 aa).

The 37-residue stretch at 1–37 (MKIFRDILTNAEVVXDNDKPMDVLDEIVYAXQGRYIE) folds into the TCTP domain.

It belongs to the TCTP family. Monomer.

The protein resides in the cytoplasm. In terms of biological role, binds calcium; exact function not known. This chain is Translationally-controlled tumor protein homolog, found in Trypanosoma brucei brucei.